The chain runs to 90 residues: Phenol 2-monooxygenase, stimulatory component DmpM (90 aa).

This sequence belongs to the TmoD/XamoD family. As to quaternary structure, active as a monomer. Formation of dimers inactivates the protein. The multicomponent enzyme phenol hydroxylase is formed by DmpL (P1 component), DmpM (P2 component), DmpN (P3 component), DmpO (P4 component) and DmpP (P5 component).

It catalyses the reaction phenol + NADH + O2 + H(+) = catechol + NAD(+) + H2O. The protein operates within aromatic compound metabolism; phenol degradation. Functionally, part of a multicomponent enzyme which catalyzes the degradation of phenol and some of its methylated derivatives. DmpM is a regulatory subunit that stimulates the phenol hydroxylase activity of the complex. The steady-state rate of phenol hydroxylase turnover is dependent on the DmpM concentration, with a maximum observed rate at about 1.5 DmpM per oxygenase monomer. Higher concentrations of DmpM inhibit phenol hydroxylase activity. May act by altering the redox potential of the oxygenase. Required for growth on phenol and for in vitro phenol hydroxylase activity. In Pseudomonas sp. (strain CF600), this protein is Phenol 2-monooxygenase, stimulatory component DmpM.